The sequence spans 416 residues: Cyclin-L1-1 (416 aa).

A disordered region spans residues 286 to 416; sequence KCTAGSANND…DSSKDRRRHH (131 aa). 4 stretches are compositionally biased toward basic and acidic residues: residues 304-315, 328-374, 384-393, and 401-410; these read PHEKATDSKKSG, SYER…DKLK, RLKDSGGHSD, and RDRDYRDSSK.

Belongs to the cyclin family. Cyclin L subfamily. In terms of assembly, forms a complex with CDKG1. Interacts with MOS4 and associates with the spliceosome.

The protein localises to the nucleus. Functionally, cognate cyclin for CDKG1. Required for synapsis and male meiosis, and for the proper splicing of specific resistance (R) genes. Involved in regulation of DNA methylation and transcriptional silencing. The sequence is that of Cyclin-L1-1 (CYCL1-1) from Arabidopsis thaliana (Mouse-ear cress).